The primary structure comprises 90 residues: YcgL domain-containing protein Spro_2755 (90 aa).

A YcgL domain is found at 1–85 (MLCVIYRSSK…PLENLLKQHL (85 aa)).

This is YcgL domain-containing protein Spro_2755 from Serratia proteamaculans (strain 568).